Reading from the N-terminus, the 316-residue chain is Aspartate carbamoyltransferase catalytic subunit (316 aa).

Residues R56 and T57 each coordinate carbamoyl phosphate. K84 contributes to the L-aspartate binding site. Carbamoyl phosphate-binding residues include R106, H139, and Q142. The L-aspartate site is built by R172 and R226. Carbamoyl phosphate is bound by residues G267 and P268.

It belongs to the aspartate/ornithine carbamoyltransferase superfamily. ATCase family. As to quaternary structure, heterododecamer (2C3:3R2) of six catalytic PyrB chains organized as two trimers (C3), and six regulatory PyrI chains organized as three dimers (R2).

The enzyme catalyses carbamoyl phosphate + L-aspartate = N-carbamoyl-L-aspartate + phosphate + H(+). Its pathway is pyrimidine metabolism; UMP biosynthesis via de novo pathway; (S)-dihydroorotate from bicarbonate: step 2/3. Its function is as follows. Catalyzes the condensation of carbamoyl phosphate and aspartate to form carbamoyl aspartate and inorganic phosphate, the committed step in the de novo pyrimidine nucleotide biosynthesis pathway. This is Aspartate carbamoyltransferase catalytic subunit from Mycobacterium sp. (strain MCS).